The following is a 309-amino-acid chain: tRNA dimethylallyltransferase (309 aa).

ATP is bound at residue 11–18 (GPTASGKS). 13–18 (TASGKS) contacts substrate. Interaction with substrate tRNA stretches follow at residues 36–39 (DSMQ) and 160–164 (QRLIR).

This sequence belongs to the IPP transferase family. Monomer. Mg(2+) is required as a cofactor.

The enzyme catalyses adenosine(37) in tRNA + dimethylallyl diphosphate = N(6)-dimethylallyladenosine(37) in tRNA + diphosphate. In terms of biological role, catalyzes the transfer of a dimethylallyl group onto the adenine at position 37 in tRNAs that read codons beginning with uridine, leading to the formation of N6-(dimethylallyl)adenosine (i(6)A). The sequence is that of tRNA dimethylallyltransferase from Rickettsia felis (strain ATCC VR-1525 / URRWXCal2) (Rickettsia azadi).